The following is a 1481-amino-acid chain: ABC-type transporter braE (1481 aa).

The next 6 helical transmembrane spans lie at Phe-27–Ala-47, Leu-86–Leu-106, Ile-130–Tyr-150, Glu-159–Leu-179, Leu-269–Cys-289, and Pro-308–Ile-328. Residues Leu-281–Ala-549 form the ABC transmembrane type-1 1 domain. An N-linked (GlcNAc...) asparagine glycan is attached at Asn-367. A run of 3 helical transmembrane segments spans residues Glu-389–Gly-409, Val-410–Met-430, and Leu-491–Phe-511. In terms of domain architecture, ABC transporter 1 spans Val-594–Lys-823. Residue Gly-627–Ser-634 participates in ATP binding. Asn-671 and Asn-813 each carry an N-linked (GlcNAc...) asparagine glycan. The next 6 membrane-spanning stretches (helical) occupy residues Ile-887 to Leu-907, Ala-928 to Leu-948, Ser-1001 to Ala-1021, Tyr-1026 to Leu-1046, Leu-1111 to Val-1131, and Leu-1144 to Leu-1164. One can recognise an ABC transmembrane type-1 2 domain in the interval Ile-887 to Thr-1166. N-linked (GlcNAc...) asparagine glycosylation is found at Asn-1207 and Asn-1232. In terms of domain architecture, ABC transporter 2 spans Leu-1224–Ser-1477. Residue Gly-1260–Ser-1267 participates in ATP binding. Asn-1330 and Asn-1364 each carry an N-linked (GlcNAc...) asparagine glycan.

The protein belongs to the ABC transporter superfamily. ABCC family. Conjugate transporter (TC 3.A.1.208) subfamily.

The protein resides in the membrane. Its function is as follows. ABC-type transporter; part of the gene cluster that mediates the biosynthesis of the brasilane terpene glycosides brasilane D and E. This is ABC-type transporter braE from Annulohypoxylon truncatum (Hypoxylon truncatum).